Here is a 977-residue protein sequence, read N- to C-terminus: MGIISKRKRHVEDSNSSSDDDDGFDITSNIGLNTADSSDESESSGDDEEEVQDIVDFSDEEDTKKKPKSSNKTLTDNNSFPSLEISDDEDSNNKGDHEDDDDDLNDYFSINNSEKSKHKKGSFPSFGFSKLILSNVHKKGFRQPTPIQRKTIPLILQKRDIVGMARTGSGKTAAFVLPMIEKLKSHSSKIGARAVILSPSRELALQTHRVFKEFSKGTHLRSVLLTGGDSLEDQFSMMMSNPDVIVATPGRFLHLKVEMSLDLKTVEYVVFDEADRLFEMGFQEQLNELLAALPMNRQTLLFSATLPSSLVDFAKAGLTNPVLVRLDAETKISENLEILFLSTKNEERENNLLYLLQDVIKIPLGTDDQIKKLSDFNKSLSDSDSEDEDNKGKQNSRKSKKGKFQKLKVSASNELPTEKSTIVFAPTRHHVEYITQLLKDSGFLVSYLYGTLDQHARKRQLLNFRAGLTSILVVTDVAARGVDIPMLANVINYSLPASSKIFIHRVGRTARAGNRGWAYSIVSETELPYMLDLELFLGKKILLTSMYEASCKLMKSKWIADGNTESSFEDPKISYTNRLVLGSAPRYDIESVGDLYKNIIESNFDLQMAKKVSLKAEKLYCRTRTAASPESIKRSKEVIASGWDEQNIRFGRNLEKEKLNFLAKFQNRRNKETVFEFGKNPNDDTAILMQKRRKQIAPIQRKARKRQELLDKERVAGLTHKIEDEILKGEDHEAGYSVPEEALKSFEDADKILEEQESSRKKKSKTFRDPNFFISHYAPAGDIQDKQLQITSGFTNDAAQAAYDLNDDDKVQVHKQTATVKWDKKRKKYVNMQGIDNKKYIIGESGQKIPASFKSGKFAEWSKSRNIKGIKTGARETSIPTNLLSDPTTDSGSQRGPGGRFKHKQNKAPRLPDKFRDDYQSQKKKVQSAIERGVSVKGFGGSSGNTELKTTAQIRKERMAKEKKRQKNARPTKKRKF.

The segment at 1 to 121 (MGIISKRKRH…NSEKSKHKKG (121 aa)) is disordered. Residues 26–35 (ITSNIGLNTA) show a composition bias toward polar residues. The span at 37–61 (SSDESESSGDDEEEVQDIVDFSDEE) shows a compositional bias: acidic residues. Residues 70 to 81 (SNKTLTDNNSFP) show a composition bias toward polar residues. A Q motif motif is present at residues 121 to 149 (GSFPSFGFSKLILSNVHKKGFRQPTPIQR). Residues 152–324 (IPLILQKRDI…KAGLTNPVLV (173 aa)) enclose the Helicase ATP-binding domain. 165–172 (ARTGSGKT) contacts ATP. The DEAD box signature appears at 272–275 (DEAD). Disordered regions lie at residues 377–403 (NKSL…KKGK) and 871–977 (KTGA…KRKF). A compositionally biased stretch (basic residues) spans 394-403 (QNSRKSKKGK). The region spanning 403-554 (KFQKLKVSAS…SMYEASCKLM (152 aa)) is the Helicase C-terminal domain. Over residues 878-894 (SIPTNLLSDPTTDSGSQ) the composition is skewed to polar residues. Over residues 910–921 (RLPDKFRDDYQS) the composition is skewed to basic and acidic residues. The span at 961–977 (KEKKRQKNARPTKKRKF) shows a compositional bias: basic residues.

It belongs to the DEAD box helicase family. DDX54/DBP10 subfamily.

The protein localises to the nucleus. Its subcellular location is the nucleolus. It catalyses the reaction ATP + H2O = ADP + phosphate + H(+). Its function is as follows. ATP-binding RNA helicase involved in the biogenesis of 60S ribosomal subunits and is required for the normal formation of 25S and 5.8S rRNAs. This chain is ATP-dependent RNA helicase DBP10 (DBP10), found in Vanderwaltozyma polyspora (strain ATCC 22028 / DSM 70294 / BCRC 21397 / CBS 2163 / NBRC 10782 / NRRL Y-8283 / UCD 57-17) (Kluyveromyces polysporus).